Here is a 517-residue protein sequence, read N- to C-terminus: ATP synthase subunit alpha (517 aa).

ATP is bound at residue 173–180 (GDRQTGKT).

It belongs to the ATPase alpha/beta chains family. As to quaternary structure, F-type ATPases have 2 components, CF(1) - the catalytic core - and CF(0) - the membrane proton channel. CF(1) has five subunits: alpha(3), beta(3), gamma(1), delta(1), epsilon(1). CF(0) has three main subunits: a(1), b(2) and c(9-12). The alpha and beta chains form an alternating ring which encloses part of the gamma chain. CF(1) is attached to CF(0) by a central stalk formed by the gamma and epsilon chains, while a peripheral stalk is formed by the delta and b chains.

The protein resides in the cell inner membrane. The enzyme catalyses ATP + H2O + 4 H(+)(in) = ADP + phosphate + 5 H(+)(out). Its function is as follows. Produces ATP from ADP in the presence of a proton gradient across the membrane. The alpha chain is a regulatory subunit. In Legionella pneumophila (strain Lens), this protein is ATP synthase subunit alpha.